The chain runs to 329 residues: Elongation factor Ts (329 aa).

Residues 79–82 (TDFV) form an involved in Mg(2+) ion dislocation from EF-Tu region.

The protein belongs to the EF-Ts family.

Its subcellular location is the cytoplasm. Associates with the EF-Tu.GDP complex and induces the exchange of GDP to GTP. It remains bound to the aminoacyl-tRNA.EF-Tu.GTP complex up to the GTP hydrolysis stage on the ribosome. The sequence is that of Elongation factor Ts from Parabacteroides distasonis (strain ATCC 8503 / DSM 20701 / CIP 104284 / JCM 5825 / NCTC 11152).